The sequence spans 875 residues: Alanine--tRNA ligase (875 aa).

Zn(2+) is bound by residues His565, His569, Cys666, and His670.

The protein belongs to the class-II aminoacyl-tRNA synthetase family. It depends on Zn(2+) as a cofactor.

The protein resides in the cytoplasm. It catalyses the reaction tRNA(Ala) + L-alanine + ATP = L-alanyl-tRNA(Ala) + AMP + diphosphate. Functionally, catalyzes the attachment of alanine to tRNA(Ala) in a two-step reaction: alanine is first activated by ATP to form Ala-AMP and then transferred to the acceptor end of tRNA(Ala). Also edits incorrectly charged Ser-tRNA(Ala) and Gly-tRNA(Ala) via its editing domain. The polypeptide is Alanine--tRNA ligase (Methylibium petroleiphilum (strain ATCC BAA-1232 / LMG 22953 / PM1)).